The chain runs to 909 residues: MPLRLDIKRKFAQRSERVKSVDLHPTEPWILASLYSGTVCIWNYQTQTITKSFEVTELPVRSAKFIPRKQWVVAGADDMYIRVYNYNTMDKVKVFEAHSDYIRCVAVHPTLPYVLSSSDDMLIKLWDWENGWACTQIFEGHSHYVMQVVFNPKDTNTFASASLDRTIKIWNLGSPDPNFTLDAHQKGVNCVDYFTGGDKPYLITGSDDHTAKVWDYQTKSCVQTLDGHTHNVSAVCFHPELPIIITGSEDGTVRIWHATTYRLENTLNYGLERVWAIGYIKSSRRVVIGYDEGTIMVKLGREIPVASMDSSGKIIWAKHNEIQTANIKSIGAGYEATDGERLPLSVKELGTCDLYPQSLKHNPNGRFVVVCGDGEYIIYTALAWRNRSFGSGLEFVWSSEGECAVRESSSKIKIFSKNFQERKSIRPTFSAEKIFGGTLLAMCSNDFICFYDWAECRLIQQIDVTVKNLYWAESGDLVAIASDTSFYILKYNRELVSSHFDSGRPTDEEGVEDAFEVLHENDERVRTGIWVGDCFIYNNSSWKLNYCVGGEVTTMYHLDRPMYLLGYIANQSRVYLVDKEFNVIGYTLLLSLIEYKTLVMRGDLDRANQILPTIPKEQHNNVAHFLESRGMIEDALEIATDPDYKFDLAIQLGRLEIAKEIAEEVQSESKWKQLGELAMSSGKLQLAEDCMKYAMDLSGLLLLYSSLGDAEGVSKLACLAKEQGKNNVAFLCLFTLGRLEDCLQLLVESNRIPEAALMARSYLPSKVSEIVALWREDLSKVNPKAAESLADPEEYSNLFEDWQVALSVEANTAETRGVYTAAENYPSHADKPSITLVEAFRNLQVEAEESLENGNIDHEVAEENGHVENEGDEEEQQEEEVNEEEGVVDADSTDGAVLVNGSEVLTPHP.

WD repeat units lie at residues Gln-13–Ser-52, Val-55–Val-94, Ala-97–Gln-136, Gly-140–Thr-180, Ala-183–Thr-224, Gly-227–Thr-266, Tyr-269–Asp-309, Thr-351–Gly-390, and Gln-461–Asp-501. The disordered stretch occupies residues Glu-862 to Pro-909. Residues Glu-870 to Ser-892 show a composition bias toward acidic residues.

Belongs to the WD repeat COPB2 family. Oligomeric complex that consists of at least the alpha, beta, beta', gamma, delta, epsilon and zeta subunits.

The protein localises to the cytoplasm. It is found in the golgi apparatus membrane. Its subcellular location is the cytoplasmic vesicle. The protein resides in the COPI-coated vesicle membrane. In terms of biological role, the coatomer is a cytosolic protein complex that binds to dilysine motifs and reversibly associates with Golgi non-clathrin-coated vesicles, which further mediate biosynthetic protein transport from the ER, via the Golgi up to the trans Golgi network. Coatomer complex is required for budding from Golgi membranes, and is essential for the retrograde Golgi-to-ER transport of dilysine-tagged proteins. This Arabidopsis thaliana (Mouse-ear cress) protein is Coatomer subunit beta'-3.